Consider the following 932-residue polypeptide: Protocadherin gamma-A6 (932 aa).

The first 29 residues, 1–29 (MAPPQRHPQRSEQVLLLTLLGTLWGAAAA), serve as a signal peptide directing secretion. 6 Cadherin domains span residues 30 to 133 (QIRY…TPRF), 134 to 242 (LKEE…TPMF), 243 to 347 (TQPV…VPEV), 348 to 452 (VVTS…PPTF), 453 to 562 (PHSS…APEI), and 570 to 682 (DGST…EPSA). The Extracellular segment spans residues 30–692 (QIRYSIPEEL…KPNDSDLTLY (663 aa)). N-linked (GlcNAc...) asparagine glycosylation is present at asparagine 81. N-linked (GlcNAc...) asparagine glycosylation is found at asparagine 419 and asparagine 545. Asparagine 685 carries an N-linked (GlcNAc...) asparagine glycan. The helical transmembrane segment at 693-713 (LVVAVAAVSCVFLAFVIVLLA) threads the bilayer. At 714–932 (LRLQRWHKSR…KKKSGKKEKK (219 aa)) the chain is on the cytoplasmic side. Disordered regions lie at residues 804-841 (PRQL…WPNN) and 902-932 (ATLT…KEKK). A compositionally biased stretch (polar residues) spans 806-841 (QLQQAPPNTDWRFSQAQRPGTSGSQNGDDTGTWPNN). The segment covering 922-932 (NKKKSGKKEKK) has biased composition (basic residues).

It is found in the cell membrane. In terms of biological role, potential calcium-dependent cell-adhesion protein. May be involved in the establishment and maintenance of specific neuronal connections in the brain. This chain is Protocadherin gamma-A6 (PCDHGA6), found in Homo sapiens (Human).